The sequence spans 72 residues: Teretoxin Tsu11.2 (72 aa).

The signal sequence occupies residues 1-21 (MMAKATMAFCFLLMLTTVMLP). The propeptide occupies 22 to 30 (TEGKTIAGR).

This sequence belongs to the teretoxin H (TH) superfamily. In terms of processing, contains 4 disulfide bonds. Expressed by the venom duct.

It is found in the secreted. The sequence is that of Teretoxin Tsu11.2 from Terebra subulata (Chocolate spotted auger).